A 1161-amino-acid chain; its full sequence is Type IV pilus biogenesis factor PilY1 (1161 aa).

The N-terminal stretch at 1–30 (MKSVLHQIGKTSLAAALSGAVLLSAQTTHA) is a signal peptide. Ca(2+) is bound by residues Asp-598, Asp-600, Asn-602, and Asp-606. The tract at residues 617–619 (RGD) is integrin-binding motif RGD. Ca(2+)-binding residues include Asp-849, Asn-851, Asp-853, Val-855, and Asp-857. A disordered region spans residues 1136–1161 (SGECLTVNPGPNTRGRQNWRPIEGKN).

Belongs to the PilY1 family. Interacts (via C-terminus) with host integrins alpha-V/beta-3 (ITGAV/ITGB3) and alpha-V/beta-5 (ITGAV/ITGB5).

It localises to the fimbrium. The protein localises to the membrane. The protein resides in the cytoplasm. Its subcellular location is the cytosol. Its function is as follows. Involved in pilus assembly, twitching motility and adhesion to host cells. Primes type IV pili (T4P) assembly and is required for inclusion of minor pilins PilV, PilW and PilX to the surface pili. Stabilizes assembled pilus fibers likely by antagonizing retraction mediated by PilT. Calcium-binding and calcium release by PilY1 seem to be essential for twitching motility and for regulation of pilus retraction dynamics of PilT. In Pseudomonas aeruginosa (strain ATCC 15692 / DSM 22644 / CIP 104116 / JCM 14847 / LMG 12228 / 1C / PRS 101 / PAO1), this protein is Type IV pilus biogenesis factor PilY1.